Reading from the N-terminus, the 265-residue chain is H-2 class II histocompatibility antigen, A-D beta chain (265 aa).

A signal peptide spans 1 to 27 (MALQIPSLLLSAAVVVLMVLSSPRTEG). The tract at residues 28-122 (GNSERHFVVQ…PETSTSLRRL (95 aa)) is beta-1. At 28 to 226 (GNSERHFVVQ…RAQSESARSK (199 aa)) the chain is on the extracellular side. 2 cysteine pairs are disulfide-bonded: C42–C106 and C145–C201. N46 is a glycosylation site (N-linked (GlcNAc...) asparagine). Residues 123 to 216 (EQPNVAISLS…SLKSPITVEW (94 aa)) form a beta-2 region. One can recognise an Ig-like C1-type domain in the interval 125–213 (PNVAISLSRT…EHPSLKSPIT (89 aa)). Residues 217–226 (RAQSESARSK) form a connecting peptide region. A helical transmembrane segment spans residues 227–247 (MLSGIGGCVLGVIFLGLGLFI). Residues 248–265 (RHRSQKGPRGPPPAGLLQ) are Cytoplasmic-facing.

Belongs to the MHC class II family. Ubiquitinated in immature dendritic cells leading to down-regulation of MHC class II.

The protein localises to the membrane. The chain is H-2 class II histocompatibility antigen, A-D beta chain (H2-Ab1) from Mus musculus (Mouse).